Reading from the N-terminus, the 90-residue chain is Kunitz-type serine protease inhibitor C1 (90 aa).

An N-terminal signal peptide occupies residues 1–24 (MSSGGLLLLLGLLTLWAELTPISG). The residue at position 25 (Gln25) is a Pyrrolidone carboxylic acid. The BPTI/Kunitz inhibitor domain occupies 31-81 (CNLAPESGRCRGHLRRIYYNPDSNKCEVFFYGGCGGNDNNFETRKKCRQTC). 3 disulfide bridges follow: Cys31/Cys81, Cys40/Cys64, and Cys56/Cys77. The propeptide occupies 85-90 (RKGRPT).

It belongs to the venom Kunitz-type family. In terms of tissue distribution, expressed by the venom gland.

It localises to the secreted. Its function is as follows. Serine protease inhibitor that inhibits trypsin. This Daboia siamensis (Eastern Russel's viper) protein is Kunitz-type serine protease inhibitor C1.